Consider the following 138-residue polypeptide: Large ribosomal subunit protein uL14 (138 aa).

Belongs to the universal ribosomal protein uL14 family. In terms of assembly, part of the 50S ribosomal subunit. Forms a cluster with proteins L3 and L24e, part of which may contact the 16S rRNA in 2 intersubunit bridges.

Binds to 23S rRNA. Forms part of two intersubunit bridges in the 70S ribosome. The polypeptide is Large ribosomal subunit protein uL14 (Sulfurisphaera tokodaii (strain DSM 16993 / JCM 10545 / NBRC 100140 / 7) (Sulfolobus tokodaii)).